The chain runs to 161 residues: Ribonuclease P protein component (161 aa).

The segment at 1–20 is disordered; that stretch reads MPDELRAEKSFPSKPYDSLK.

This sequence belongs to the RnpA family. As to quaternary structure, consists of a catalytic RNA component (M1 or rnpB) and a protein subunit.

The enzyme catalyses Endonucleolytic cleavage of RNA, removing 5'-extranucleotides from tRNA precursor.. Its function is as follows. RNaseP catalyzes the removal of the 5'-leader sequence from pre-tRNA to produce the mature 5'-terminus. It can also cleave other RNA substrates such as 4.5S RNA. The protein component plays an auxiliary but essential role in vivo by binding to the 5'-leader sequence and broadening the substrate specificity of the ribozyme. This is Ribonuclease P protein component from Helicobacter pylori (strain P12).